The sequence spans 125 residues: MKIAILVIALGLAGCVAQGPVVNQSDVGKIVNCSSKFYNPNVKCYKEAPKQTVEQMQANFDEAIRPDESAQAYRNSDVITREEKIENYCAELWANWANNYQWRTGKNAPMEYVVNSYNSCVKNLT.

This is an uncharacterized protein from Escherichia coli (Bacteriophage T4).